The following is a 521-amino-acid chain: Histidine--tRNA ligase (521 aa).

L-histidine is bound by residues 137–139 (DLT), arginine 164, glutamine 180, aspartate 184, arginine 338, and 342–343 (YY).

The protein belongs to the class-II aminoacyl-tRNA synthetase family.

It carries out the reaction tRNA(His) + L-histidine + ATP = L-histidyl-tRNA(His) + AMP + diphosphate + H(+). Functionally, involved in protein synthesis. Catalyzes the specific attachment of an amino acid to its cognate tRNA in a 2 step reaction: the amino acid (AA) is first activated by ATP to form AA-AMP and then transferred to the acceptor end of the tRNA. Required for germ cell development. This chain is Histidine--tRNA ligase, found in Caenorhabditis elegans.